We begin with the raw amino-acid sequence, 1024 residues long: Myosin phosphatase Rho-interacting protein (1024 aa).

Positions methionine 1–threonine 382 are interaction with F-actin. A PH 1 domain is found at lysine 43 to arginine 150. The disordered stretch occupies residues asparagine 152 to valine 262. The span at serine 179–serine 190 shows a compositional bias: low complexity. Residues serine 193, serine 219, serine 221, serine 225, and serine 227 each carry the phosphoserine modification. The span at serine 221 to alanine 233 shows a compositional bias: low complexity. The segment covering proline 240–valine 262 has biased composition (basic and acidic residues). Residues serine 266, serine 270, serine 289, and serine 292 each carry the phosphoserine modification. Disordered stretches follow at residues alanine 274–serine 301 and proline 328–serine 379. Position 295 is a phosphothreonine (threonine 295). A compositionally biased stretch (basic and acidic residues) spans arginine 333–alanine 349. Serine 364 is modified (phosphoserine). Residues leucine 386 to leucine 482 form the PH 2 domain. The segment at alanine 486–arginine 583 is disordered. Polar residues predominate over residues aspartate 488 to arginine 508. A Phosphoserine modification is found at serine 492. Residues proline 522 to glutamate 545 show a composition bias toward basic and acidic residues. Residues glutamate 545–serine 823 form an interaction with RHOA region. Serine 617 is modified (phosphoserine). The residue at position 645 (threonine 645) is a Phosphothreonine. Residues histidine 672–serine 976 adopt a coiled-coil conformation. Serine 799 carries the phosphoserine modification. The interaction with PPP1R12A stretch occupies residues serine 823–leucine 878. Residues leucine 972–aspartate 995 are disordered. 5 positions are modified to phosphoserine: serine 976, glycine 979, serine 992, serine 1013, and serine 1015.

Binds RHOA, PPP1R12A/MBS and PPP1R12C/MBS85 through adjacent coiled coil domains. Interacts with MYZAP. Binds F-actin through its N-terminus. In terms of tissue distribution, expressed in Kidney, Brain, Heart and Lung.

The protein localises to the cytoplasm. The protein resides in the cytoskeleton. Functionally, targets myosin phosphatase to the actin cytoskeleton. Required for the regulation of the actin cytoskeleton by RhoA and ROCK1. Depletion leads to an increased number of stress fibers in smooth muscle cells through stabilization of actin fibers by phosphorylated myosin. Overexpression of MRIP as well as its F-actin-binding region leads to disassembly of stress fibers in neuronal cells. The chain is Myosin phosphatase Rho-interacting protein (Mprip) from Mus musculus (Mouse).